The chain runs to 411 residues: Dihydrosphingosine 1-phosphate phosphatase C823.11 (411 aa).

Over 1–74 the chain is Lumenal; the sequence is MVHKKKNVDI…LDVYFMYTAT (74 aa). A helical transmembrane segment spans residues 75–95; the sequence is LGTHVFFMLALPIFFWSGCIY. The Cytoplasmic segment spans residues 96–99; it reads YTLD. Residues 100 to 120 form a helical membrane-spanning segment; it reads ITQLFAAGVYFSGCIKDYFCL. The tract at residues 115–123 is phosphatase sequence motif I; sequence KDYFCLPRP. Residues 121–170 lie on the Lumenal side of the membrane; sequence PRPRSPPMVRLTLSSDAEYEYGFPSTHTTNAMATGFYSLFLLLSMSDSMS. A phosphatase sequence motif II region spans residues 144-147; the sequence is PSTH. The active-site Proton donor is His147. Residues 171-191 traverse the membrane as a helical segment; sequence SISYYFLLSLVLLYIASISLG. The phosphatase sequence motif III stretch occupies residues 191–202; the sequence is GRIYCGMHGFMD. Residues 192 to 195 are Cytoplasmic-facing; the sequence is RIYC. The chain crosses the membrane as a helical span at residues 196 to 216; the sequence is GMHGFMDVSTGTILGVTLAIF. His198 functions as the Nucleophile in the catalytic mechanism. Topologically, residues 217 to 233 are lumenal; the sequence is QWKYADFFHNVWSSSST. The chain crosses the membrane as a helical span at residues 234-254; the sequence is SVPILSVVLALFFIWFHPQPA. Over 255–259 the chain is Cytoplasmic; it reads ERCIC. The helical transmembrane segment at 260–280 threads the bilayer; the sequence is LEDSISFISVIMGIDLGTWFA. The Lumenal segment spans residues 281–293; sequence SPESLSHLHDNLN. Residues 294-314 form a helical membrane-spanning segment; sequence SYFLLKFFVRVLFGVCMILIW. Over 315 to 387 the chain is Cytoplasmic; that stretch reads KSFAKQALLA…VRFDIETIAR (73 aa). The helical transmembrane segment at 388–408 threads the bilayer; that stretch reads IIVYSGIGFLCTYFAPKVFLK. Residues 409 to 411 are Lumenal-facing; the sequence is WKI.

It belongs to the type 2 lipid phosphate phosphatase family.

The protein resides in the endoplasmic reticulum membrane. Dihydrosphingosine 1-phosphate phosphatase required for efficient ceramide synthesis from exogenous sphingoid bases. Involved in endocytosis and calcium-mediated signaling. This Schizosaccharomyces pombe (strain 972 / ATCC 24843) (Fission yeast) protein is Dihydrosphingosine 1-phosphate phosphatase C823.11.